Here is a 272-residue protein sequence, read N- to C-terminus: Shikimate dehydrogenase (NADP(+)) (272 aa).

Residues S14–S16 and T61 contribute to the shikimate site. K65 acts as the Proton acceptor in catalysis. E77 is an NADP(+) binding site. Shikimate is bound by residues N86 and D102. NADP(+)-binding positions include G126–A130, N149–R154, and M213. Y215 contacts shikimate. G237 serves as a coordination point for NADP(+).

This sequence belongs to the shikimate dehydrogenase family. As to quaternary structure, homodimer.

It carries out the reaction shikimate + NADP(+) = 3-dehydroshikimate + NADPH + H(+). The protein operates within metabolic intermediate biosynthesis; chorismate biosynthesis; chorismate from D-erythrose 4-phosphate and phosphoenolpyruvate: step 4/7. Functionally, involved in the biosynthesis of the chorismate, which leads to the biosynthesis of aromatic amino acids. Catalyzes the reversible NADPH linked reduction of 3-dehydroshikimate (DHSA) to yield shikimate (SA). The sequence is that of Shikimate dehydrogenase (NADP(+)) from Salmonella paratyphi A (strain ATCC 9150 / SARB42).